A 25-amino-acid polypeptide reads, in one-letter code: Caerin-1.7 (25 aa).

At Leu-25 the chain carries Leucine amide.

This sequence belongs to the frog skin active peptide (FSAP) family. Caerin subfamily. Post-translationally, caerin-1.7.1 does not have any antibacterial activity. Expressed by the skin dorsal glands.

It localises to the secreted. Its function is as follows. Antibacterial peptide, that adopts an alpha helical conformation which can disrupt bacterial membranes. Each caerin displays a different antimicrobial specificity. The protein is Caerin-1.7 of Ranoidea xanthomera (Northern orange-eyed tree frog).